Reading from the N-terminus, the 338-residue chain is Aspartate carbamoyltransferase catalytic subunit (338 aa).

The carbamoyl phosphate site is built by Arg71 and Thr72. Residue Lys99 participates in L-aspartate binding. Carbamoyl phosphate-binding residues include Arg121, His151, and Gln154. Positions 184 and 239 each coordinate L-aspartate. Residues Gly280 and Pro281 each coordinate carbamoyl phosphate.

The protein belongs to the aspartate/ornithine carbamoyltransferase superfamily. ATCase family. Heterododecamer (2C3:3R2) of six catalytic PyrB chains organized as two trimers (C3), and six regulatory PyrI chains organized as three dimers (R2).

The enzyme catalyses carbamoyl phosphate + L-aspartate = N-carbamoyl-L-aspartate + phosphate + H(+). It functions in the pathway pyrimidine metabolism; UMP biosynthesis via de novo pathway; (S)-dihydroorotate from bicarbonate: step 2/3. In terms of biological role, catalyzes the condensation of carbamoyl phosphate and aspartate to form carbamoyl aspartate and inorganic phosphate, the committed step in the de novo pyrimidine nucleotide biosynthesis pathway. This chain is Aspartate carbamoyltransferase catalytic subunit, found in Stutzerimonas stutzeri (strain A1501) (Pseudomonas stutzeri).